Here is a 152-residue protein sequence, read N- to C-terminus: Transcriptional regulator MraZ (152 aa).

SpoVT-AbrB domains follow at residues 5–52 (ASAI…PIHE) and 81–124 (AHEC…DEAA).

The protein belongs to the MraZ family. Forms oligomers.

The protein localises to the cytoplasm. It is found in the nucleoid. The polypeptide is Transcriptional regulator MraZ (Shewanella pealeana (strain ATCC 700345 / ANG-SQ1)).